We begin with the raw amino-acid sequence, 175 residues long: Gamma-crystallin B (175 aa).

Beta/gamma crystallin 'Greek key' domains follow at residues 2–40 and 41–83; these read GKIT…RVDS and GCWM…RLIP. The connecting peptide stretch occupies residues 84 to 88; it reads QHSGT. 2 consecutive Beta/gamma crystallin 'Greek key' domains span residues 89–129 and 130–172; these read YRMR…NVME and GCWV…RRVM.

Belongs to the beta/gamma-crystallin family.

Functionally, crystallins are the dominant structural components of the vertebrate eye lens. This is Gamma-crystallin B (Crygb) from Rattus norvegicus (Rat).